The sequence spans 1531 residues: Myosin-17 (1531 aa).

The region spanning 8-57 (IVGSHVWIEDPGAAWIDGEVVKINGEEVHAHTTNGKTVVANIANVFPKDT) is the Myosin N-terminal SH3-like domain. A Myosin motor domain is found at 62–732 (GGVDDMTKLS…QMAELDARRA (671 aa)). Residues 156 to 163 (GESGAGKT) and 209 to 217 (NNNSSRFGK) each bind ATP. Actin-binding stretches follow at residues 495–529 (LIEK…YQTF), 531–554 (NYKR…AGEV), 589–613 (FPRL…KLQL), and 613–635 (LQSL…KPNN). IQ domains follow at residues 758–787 (LRGA…QAAA), 783–812 (RQAA…STIT), 806–835 (IRHS…MKAA), 831–860 (QMKA…AALS), and 854–883 (LQKA…AARD). A coiled-coil region spans residues 884–1056 (TGALREAKDK…VLRQQALAIS (173 aa)). A disordered region spans residues 1071 to 1090 (LPRTPENGNYLNGGTKTTPD). The segment covering 1076-1090 (ENGNYLNGGTKTTPD) has biased composition (polar residues). The Dilute domain maps to 1159-1470 (DRIIQTIATA…IANMRVMMTE (312 aa)). Position 1517 is a phosphoserine (Ser1517).

Belongs to the TRAFAC class myosin-kinesin ATPase superfamily. Myosin family. Plant myosin class XI subfamily. As to quaternary structure, homodimer. Interacts with MYOB1, MYOB2 and MYOB3. Interacts with PHOX1 and PHOX2. As to expression, expressed ubiquitously.

It localises to the cytoplasm. Myosin heavy chain that is required for the cell cycle-regulated transport of various organelles and proteins for their segregation. Functions by binding with its tail domain to receptor proteins on organelles and exerting force with its N-terminal motor domain against actin filaments, thereby transporting its cargo along polarized actin cables. Involved in the tip growth of root hair cells and in the elongation of trichome stalk and branches. Plays a major role in trafficking of Golgi stacks, mitochondria and peroxisomes during root hair development. Acts as the primary contributor to ER streaming with a major role in the movement of Golgi bodies. Required for development of pavement cells, trichomes, and stigmatic papillae. Together with XI-F, required for the regulation of organ bending, such as gravitropic root bending. In Arabidopsis thaliana (Mouse-ear cress), this protein is Myosin-17.